Reading from the N-terminus, the 538-residue chain is Mitochondria-eating protein (538 aa).

The tract at residues 1–273 (MAENLKRLVS…PRSRSCSRSR (273 aa)) is interaction with YWHAG/14-3-3 protein gamma. A Phosphoserine modification is found at Ser85. Residues 97–137 (SKVPSLQDTFDRERHKDPSPRDRDMQQLDSNLNSTRSQCNQ) are disordered. Residues 105–122 (TFDRERHKDPSPRDRDMQ) show a composition bias toward basic and acidic residues. Coiled coils occupy residues 118-187 (DRDM…RHRN) and 219-256 (DQQDTEAMSDYKKQLRNLKEEIAVLSAEKSALQGRSSR). The span at 123 to 137 (QLDSNLNSTRSQCNQ) shows a compositional bias: polar residues. 2 positions are modified to phosphoserine: Ser156 and Ser159. 2 disordered regions span residues 173–226 (QLKS…TEAM) and 247–294 (KSAL…SKLS). The span at 181-210 (EDARHRNTDQRSSENRRSEPWSLEERKREQ) shows a compositional bias: basic and acidic residues. The segment covering 211–224 (WNSLKQNADQQDTE) has biased composition (polar residues). Residues 253 to 278 (RSSRSRSPSPAPRSRSCSRSRSASPS) show a composition bias toward low complexity. Ser287 and Ser509 each carry phosphoserine.

It belongs to the MIEAP family. Interacts (via coiled-coil domains) with BNIP3L (via BH3 domain). Interacts (via coiled-coil domains) with BNIP3 (via BH3 domain). As to quaternary structure, interacts with YWHAG/14-3-3 protein gamma; a protein that also plays a role in MALM.

The protein localises to the cytoplasm. It is found in the cytosol. Its subcellular location is the mitochondrion outer membrane. It localises to the mitochondrion matrix. In terms of biological role, key regulator of mitochondrial quality that mediates the repairing or degradation of unhealthy mitochondria in response to mitochondrial damage. Mediator of mitochondrial protein catabolic process (also named MALM) by mediating the degradation of damaged proteins inside mitochondria by promoting the accumulation in the mitochondrial matrix of hydrolases that are characteristic of the lysosomal lumen. Also involved in mitochondrion degradation of damaged mitochondria by promoting the formation of vacuole-like structures (named MIV), which engulf and degrade unhealthy mitochondria by accumulating lysosomes. The physical interaction of SPATA18/MIEAP, BNIP3 and BNIP3L/NIX at the mitochondrial outer membrane regulates the opening of a pore in the mitochondrial double membrane in order to mediate the translocation of lysosomal proteins from the cytoplasm to the mitochondrial matrix. Binds cardiolipin. May form molecular condensates (non-membrane-bounded organelles) within mitochondria that compartmentalize and promote cardiolipin metabolism. In Homo sapiens (Human), this protein is Mitochondria-eating protein (SPATA18).